The primary structure comprises 382 residues: 1-deoxy-D-xylulose 5-phosphate reductoisomerase (382 aa).

Residues Thr10, Gly11, Ser12, Ile13, Gly36, and Asn122 each contribute to the NADPH site. A 1-deoxy-D-xylulose 5-phosphate-binding site is contributed by Lys123. Glu124 contacts NADPH. Asp148 provides a ligand contact to Mn(2+). Residues Ser149, Glu150, Ser174, and His197 each contribute to the 1-deoxy-D-xylulose 5-phosphate site. Glu150 serves as a coordination point for Mn(2+). Residue Gly203 coordinates NADPH. 1-deoxy-D-xylulose 5-phosphate contacts are provided by Ser210, Asn215, Lys216, and Glu219. A Mn(2+)-binding site is contributed by Glu219.

It belongs to the DXR family. The cofactor is Mg(2+). Mn(2+) serves as cofactor.

It carries out the reaction 2-C-methyl-D-erythritol 4-phosphate + NADP(+) = 1-deoxy-D-xylulose 5-phosphate + NADPH + H(+). It functions in the pathway isoprenoid biosynthesis; isopentenyl diphosphate biosynthesis via DXP pathway; isopentenyl diphosphate from 1-deoxy-D-xylulose 5-phosphate: step 1/6. In terms of biological role, catalyzes the NADPH-dependent rearrangement and reduction of 1-deoxy-D-xylulose-5-phosphate (DXP) to 2-C-methyl-D-erythritol 4-phosphate (MEP). The protein is 1-deoxy-D-xylulose 5-phosphate reductoisomerase of Prosthecochloris aestuarii (strain DSM 271 / SK 413).